The sequence spans 417 residues: NADH-quinone oxidoreductase subunit D (417 aa).

The protein belongs to the complex I 49 kDa subunit family. In terms of assembly, NDH-1 is composed of 14 different subunits. Subunits NuoB, C, D, E, F, and G constitute the peripheral sector of the complex.

Its subcellular location is the cell inner membrane. It carries out the reaction a quinone + NADH + 5 H(+)(in) = a quinol + NAD(+) + 4 H(+)(out). Its function is as follows. NDH-1 shuttles electrons from NADH, via FMN and iron-sulfur (Fe-S) centers, to quinones in the respiratory chain. The immediate electron acceptor for the enzyme in this species is believed to be ubiquinone. Couples the redox reaction to proton translocation (for every two electrons transferred, four hydrogen ions are translocated across the cytoplasmic membrane), and thus conserves the redox energy in a proton gradient. The chain is NADH-quinone oxidoreductase subunit D from Francisella tularensis subsp. mediasiatica (strain FSC147).